Reading from the N-terminus, the 537-residue chain is CTP synthase (537 aa).

The amidoligase domain stretch occupies residues 1–265 (MTKFIFVTGG…GKYLIKRLKL (265 aa)). CTP is bound at residue serine 13. A UTP-binding site is contributed by serine 13. ATP is bound at residue 14–19 (GLGKGI). An L-glutamine-binding site is contributed by tyrosine 54. Aspartate 71 is a binding site for ATP. Residues aspartate 71 and glutamate 139 each contribute to the Mg(2+) site. Residues 146-148 (DIE), 186-191 (KTKPTQ), and lysine 222 each bind CTP. UTP contacts are provided by residues 186-191 (KTKPTQ) and lysine 222. In terms of domain architecture, Glutamine amidotransferase type-1 spans 290–532 (EIAIVGKYVK…VRAAKEYKQE (243 aa)). Glycine 351 provides a ligand contact to L-glutamine. The active-site Nucleophile; for glutamine hydrolysis is the cysteine 378. L-glutamine-binding positions include 379–382 (FGFQ), glutamate 402, and arginine 459. Catalysis depends on residues histidine 505 and glutamate 507.

Belongs to the CTP synthase family. Homotetramer.

The enzyme catalyses UTP + L-glutamine + ATP + H2O = CTP + L-glutamate + ADP + phosphate + 2 H(+). It catalyses the reaction L-glutamine + H2O = L-glutamate + NH4(+). The catalysed reaction is UTP + NH4(+) + ATP = CTP + ADP + phosphate + 2 H(+). The protein operates within pyrimidine metabolism; CTP biosynthesis via de novo pathway; CTP from UDP: step 2/2. Allosterically activated by GTP, when glutamine is the substrate; GTP has no effect on the reaction when ammonia is the substrate. The allosteric effector GTP functions by stabilizing the protein conformation that binds the tetrahedral intermediate(s) formed during glutamine hydrolysis. Inhibited by the product CTP, via allosteric rather than competitive inhibition. Functionally, catalyzes the ATP-dependent amination of UTP to CTP with either L-glutamine or ammonia as the source of nitrogen. Regulates intracellular CTP levels through interactions with the four ribonucleotide triphosphates. This Pyrococcus horikoshii (strain ATCC 700860 / DSM 12428 / JCM 9974 / NBRC 100139 / OT-3) protein is CTP synthase.